Here is a 176-residue protein sequence, read N- to C-terminus: ATP-dependent protease subunit HslV (176 aa).

Thr2 is a catalytic residue. Residues Gly157, Cys160, and Thr163 each coordinate Na(+).

This sequence belongs to the peptidase T1B family. HslV subfamily. As to quaternary structure, a double ring-shaped homohexamer of HslV is capped on each side by a ring-shaped HslU homohexamer. The assembly of the HslU/HslV complex is dependent on binding of ATP.

The protein localises to the cytoplasm. It carries out the reaction ATP-dependent cleavage of peptide bonds with broad specificity.. Its activity is regulated as follows. Allosterically activated by HslU binding. Its function is as follows. Protease subunit of a proteasome-like degradation complex believed to be a general protein degrading machinery. This Pseudomonas putida (strain ATCC 47054 / DSM 6125 / CFBP 8728 / NCIMB 11950 / KT2440) protein is ATP-dependent protease subunit HslV.